Here is an 81-residue protein sequence, read N- to C-terminus: ATP synthase subunit c, chloroplastic (81 aa).

Transmembrane regions (helical) follow at residues 3–23 (PIIS…ASIG) and 57–77 (LAFM…LLFA).

This sequence belongs to the ATPase C chain family. In terms of assembly, F-type ATPases have 2 components, F(1) - the catalytic core - and F(0) - the membrane proton channel. F(1) has five subunits: alpha(3), beta(3), gamma(1), delta(1), epsilon(1). F(0) has four main subunits: a(1), b(1), b'(1) and c(10-14). The alpha and beta chains form an alternating ring which encloses part of the gamma chain. F(1) is attached to F(0) by a central stalk formed by the gamma and epsilon chains, while a peripheral stalk is formed by the delta, b and b' chains.

The protein localises to the plastid. Its subcellular location is the chloroplast thylakoid membrane. In terms of biological role, f(1)F(0) ATP synthase produces ATP from ADP in the presence of a proton or sodium gradient. F-type ATPases consist of two structural domains, F(1) containing the extramembraneous catalytic core and F(0) containing the membrane proton channel, linked together by a central stalk and a peripheral stalk. During catalysis, ATP synthesis in the catalytic domain of F(1) is coupled via a rotary mechanism of the central stalk subunits to proton translocation. Functionally, key component of the F(0) channel; it plays a direct role in translocation across the membrane. A homomeric c-ring of between 10-14 subunits forms the central stalk rotor element with the F(1) delta and epsilon subunits. This chain is ATP synthase subunit c, chloroplastic, found in Phaseolus vulgaris (Kidney bean).